Consider the following 1033-residue polypeptide: Isoleucine--tRNA ligase (1033 aa).

Positions 47–57 match the 'HIGH' region motif; the sequence is PTANGLPHVGH. The short motif at 590–594 is the 'KMSKS' region element; it reads KMSKS. Residue Lys593 coordinates ATP.

It belongs to the class-I aminoacyl-tRNA synthetase family. IleS type 2 subfamily. As to quaternary structure, monomer. It depends on Zn(2+) as a cofactor.

The protein resides in the cytoplasm. The catalysed reaction is tRNA(Ile) + L-isoleucine + ATP = L-isoleucyl-tRNA(Ile) + AMP + diphosphate. Functionally, catalyzes the attachment of isoleucine to tRNA(Ile). As IleRS can inadvertently accommodate and process structurally similar amino acids such as valine, to avoid such errors it has two additional distinct tRNA(Ile)-dependent editing activities. One activity is designated as 'pretransfer' editing and involves the hydrolysis of activated Val-AMP. The other activity is designated 'posttransfer' editing and involves deacylation of mischarged Val-tRNA(Ile). The polypeptide is Isoleucine--tRNA ligase (Bacillus thuringiensis (strain Al Hakam)).